The chain runs to 1472 residues: Gag-Pol polyprotein (1472 aa).

The N-myristoyl glycine; by host moiety is linked to residue Gly2. Positions 16 to 22 (FEKIRLR) match the Nuclear export signal motif. The short motif at 26 to 32 (KKKYQIK) is the Nuclear localization signal element. 2 disordered regions span residues 115–135 (EKAA…SRNY) and 215–234 (DRTH…RDPT). Tyr135 is subject to Phosphotyrosine; by host. 2 CCHC-type zinc fingers span residues 390–407 (LKCF…ECKA) and 411–428 (IKCF…DCKN). A disordered region spans residues 454-500 (HSWSGTNSPPNGNSLRSSKEAPPAVCREGTAPERGERTDKETEGERS). Residues 456 to 469 (WSGTNSPPNGNSLR) show a composition bias toward polar residues. The span at 483 to 499 (TAPERGERTDKETEGER) shows a compositional bias: basic and acidic residues. The 74-residue stretch at 524-597 (VQALLDTGAD…TPINIIGRNI (74 aa)) folds into the Peptidase A2 domain. Asp529 acts as the For protease activity; shared with dimeric partner in catalysis. The 191-residue stretch at 653 to 843 (EGKLSRIGGE…PPWEWMGYKL (191 aa)) folds into the Reverse transcriptase domain. The Mg(2+) site is built by Asp719, Asp794, and Asp795. Residues 836 to 844 (WEWMGYKLH) form an RT 'primer grip' region. The short motif at 1007 to 1023 (WDMWWQDYWQVSWIPEW) is the Tryptophan repeat motif element. The RNase H type-1 domain maps to 1043 to 1166 (IKGEDVYYVD…IDKLVSKGIR (124 aa)). Mg(2+)-binding residues include Asp1052, Glu1087, Asp1107, and Asp1158. The Integrase-type zinc finger occupies 1172-1213 (DRIEEAQDDHAKYHNNWRSMVQEFGLPNIVAKEIVAACPKCQ). Residues His1181, His1185, Cys1209, and Cys1212 each contribute to the Zn(2+) site. Positions 1223 to 1373 (VDASIETWQM…SSAERLVNML (151 aa)) constitute an Integrase catalytic domain. Positions 1233 and 1285 each coordinate Mg(2+). The segment at residues 1392-1439 (FKVYYREGRDPVWKGPARLIWKGEGAVVIKEGEDIKVVPRRKAKIIKD) is a DNA-binding region (integrase-type). Positions 1440-1472 (YGERKTMDSEGSMEGVREANKQMEGDSDLQDQE) are disordered. Residues 1454-1463 (GVREANKQME) show a composition bias toward basic and acidic residues.

In terms of assembly, homotrimer. Interacts with gp41 (via C-terminus). Homodimer. The active site consists of two apposed aspartic acid residues. As to quaternary structure, heterodimer of p66 RT and p51 RT (RT p66/p51). Heterodimerization of RT is essential for DNA polymerase activity. Despite the sequence identities, p66 RT and p51 RT have distinct folding. In terms of assembly, homotetramer; may further associate as a homohexadecamer. The cofactor is Mg(2+). In terms of processing, specific enzymatic cleavages by the viral protease yield mature proteins. The protease is released by autocatalytic cleavage. The polyprotein is cleaved during and after budding, this process is termed maturation. Proteolytic cleavage of p66 RT removes the RNase H domain to yield the p51 RT subunit. Post-translationally, capsid protein p24 is phosphorylated.

It localises to the virion. It is found in the host nucleus. Its subcellular location is the host cytoplasm. The protein resides in the host cell membrane. It carries out the reaction Specific for a P1 residue that is hydrophobic, and P1' variable, but often Pro.. It catalyses the reaction Endohydrolysis of RNA in RNA/DNA hybrids. Three different cleavage modes: 1. sequence-specific internal cleavage of RNA. Human immunodeficiency virus type 1 and Moloney murine leukemia virus enzymes prefer to cleave the RNA strand one nucleotide away from the RNA-DNA junction. 2. RNA 5'-end directed cleavage 13-19 nucleotides from the RNA end. 3. DNA 3'-end directed cleavage 15-20 nucleotides away from the primer terminus.. The catalysed reaction is 3'-end directed exonucleolytic cleavage of viral RNA-DNA hybrid.. The enzyme catalyses DNA(n) + a 2'-deoxyribonucleoside 5'-triphosphate = DNA(n+1) + diphosphate. The viral protease is inhibited by many synthetic protease inhibitors (PIs), such as amprenavir, atazanavir, indinavir, loprinavir, nelfinavir, ritonavir and saquinavir. RT can be inhibited either by nucleoside RT inhibitors (NRTIs) or by non nucleoside RT inhibitors (NNRTIs). NRTIs act as chain terminators, whereas NNRTIs inhibit DNA polymerization by binding a small hydrophobic pocket near the RT active site and inducing an allosteric change in this region. Classical NRTIs are abacavir, adefovir (PMEA), didanosine (ddI), lamivudine (3TC), stavudine (d4T), tenofovir (PMPA), zalcitabine (ddC), and zidovudine (AZT). Classical NNRTIs are atevirdine (BHAP U-87201E), delavirdine, efavirenz (DMP-266), emivirine (I-EBU), and nevirapine (BI-RG-587). The tritherapies used as a basic effective treatment of AIDS associate two NRTIs and one NNRTI. Use of protease inhibitors in tritherapy regimens permit more ambitious therapeutic strategies. In terms of biological role, gag-Pol polyprotein and Gag polyprotein may regulate their own translation, by the binding genomic RNA in the 5'-UTR. At low concentration, Gag-Pol and Gag would promote translation, whereas at high concentration, the polyproteins encapsidate genomic RNA and then shut off translation. Matrix protein p17 has two main functions: in infected cell, it targets Gag and Gag-pol polyproteins to the plasma membrane via a multipartite membrane-binding signal, that includes its myristointegration complex. The myristoylation signal and the NLS exert conflicting influences its subcellular localization. The key regulation of these motifs might be phosphorylation of a portion of MA molecules on the C-terminal tyrosine at the time of virus maturation, by virion-associated cellular tyrosine kinase. Implicated in the release from host cell mediated by Vpu. Its function is as follows. Capsid protein p24 forms the conical core that encapsulates the genomic RNA-nucleocapsid complex in the virion. The core is constituted by capsid protein hexamer subunits. The core is disassembled soon after virion entry. Interaction with host PPIA/CYPA protects the virus from restriction by host TRIM5-alpha and from an unknown antiviral activity in host cells. This capsid restriction by TRIM5 is one of the factors which restricts SIV to the simian species. Functionally, nucleocapsid protein p7 encapsulates and protects viral dimeric unspliced (genomic) RNA. Binds these RNAs through its zinc fingers. Facilitates rearangement of nucleic acid secondary structure during retrotranscription of genomic RNA. This capability is referred to as nucleic acid chaperone activity. In terms of biological role, the aspartyl protease mediates proteolytic cleavages of Gag and Gag-Pol polyproteins during or shortly after the release of the virion from the plasma membrane. Cleavages take place as an ordered, step-wise cascade to yield mature proteins. This process is called maturation. Displays maximal activity during the budding process just prior to particle release from the cell. Also cleaves Nef and Vif, probably concomitantly with viral structural proteins on maturation of virus particles. Hydrolyzes host EIF4GI and PABP1 in order to shut off the capped cellular mRNA translation. The resulting inhibition of cellular protein synthesis serves to ensure maximal viral gene expression and to evade host immune response. Reverse transcriptase/ribonuclease H (RT) is a multifunctional enzyme that converts the viral dimeric RNA genome into dsDNA in the cytoplasm, shortly after virus entry into the cell. This enzyme displays a DNA polymerase activity that can copy either DNA or RNA templates, and a ribonuclease H (RNase H) activity that cleaves the RNA strand of RNA-DNA heteroduplexes in a partially processive 3' to 5' endonucleasic mode. Conversion of viral genomic RNA into dsDNA requires many steps. A tRNA binds to the primer-binding site (PBS) situated at the 5'-end of the viral RNA. RT uses the 3' end of the tRNA primer to perform a short round of RNA-dependent minus-strand DNA synthesis. The reading proceeds through the U5 region and ends after the repeated (R) region which is present at both ends of viral RNA. The portion of the RNA-DNA heteroduplex is digested by the RNase H, resulting in a ssDNA product attached to the tRNA primer. This ssDNA/tRNA hybridizes with the identical R region situated at the 3' end of viral RNA. This template exchange, known as minus-strand DNA strong stop transfer, can be either intra- or intermolecular. RT uses the 3' end of this newly synthesized short ssDNA to perform the RNA-dependent minus-strand DNA synthesis of the whole template. RNase H digests the RNA template except for two polypurine tracts (PPTs) situated at the 5'-end and near the center of the genome. It is not clear if both polymerase and RNase H activities are simultaneous. RNase H can probably proceed both in a polymerase-dependent (RNA cut into small fragments by the same RT performing DNA synthesis) and a polymerase-independent mode (cleavage of remaining RNA fragments by free RTs). Secondly, RT performs DNA-directed plus-strand DNA synthesis using the PPTs that have not been removed by RNase H as primers. PPTs and tRNA primers are then removed by RNase H. The 3' and 5' ssDNA PBS regions hybridize to form a circular dsDNA intermediate. Strand displacement synthesis by RT to the PBS and PPT ends produces a blunt ended, linear dsDNA copy of the viral genome that includes long terminal repeats (LTRs) at both ends. Its function is as follows. Integrase catalyzes viral DNA integration into the host chromosome, by performing a series of DNA cutting and joining reactions. This enzyme activity takes place after virion entry into a cell and reverse transcription of the RNA genome in dsDNA. The first step in the integration process is 3' processing. This step requires a complex comprising the viral genome, matrix protein, Vpr and integrase. This complex is called the pre-integration complex (PIC). The integrase protein removes 2 nucleotides from each 3' end of the viral DNA, leaving recessed CA OH's at the 3' ends. In the second step, the PIC enters cell nucleus. This process is mediated through integrase and Vpr proteins, and allows the virus to infect a non dividing cell. This ability to enter the nucleus is specific of lentiviruses, other retroviruses cannot and rely on cell division to access cell chromosomes. In the third step, termed strand transfer, the integrase protein joins the previously processed 3' ends to the 5' ends of strands of target cellular DNA at the site of integration. The 5'-ends are produced by integrase-catalyzed staggered cuts, 5 bp apart. A Y-shaped, gapped, recombination intermediate results, with the 5'-ends of the viral DNA strands and the 3' ends of target DNA strands remaining unjoined, flanking a gap of 5 bp. The last step is viral DNA integration into host chromosome. This involves host DNA repair synthesis in which the 5 bp gaps between the unjoined strands are filled in and then ligated. Since this process occurs at both cuts flanking the SIV genome, a 5 bp duplication of host DNA is produced at the ends of SIV integration. Alternatively, Integrase may catalyze the excision of viral DNA just after strand transfer, this is termed disintegration. This is Gag-Pol polyprotein (gag-pol) from Simian immunodeficiency virus agm.grivet (isolate AGM gr-1) (SIV-agm.gri).